A 158-amino-acid polypeptide reads, in one-letter code: NADPH-dependent 7-cyano-7-deazaguanine reductase (158 aa).

The Thioimide intermediate role is filled by cysteine 56. Catalysis depends on aspartate 63, which acts as the Proton donor. Residues valine 78–serine 80 and histidine 97–glutamate 98 contribute to the substrate site.

It belongs to the GTP cyclohydrolase I family. QueF type 1 subfamily.

The protein resides in the cytoplasm. The enzyme catalyses 7-aminomethyl-7-carbaguanine + 2 NADP(+) = 7-cyano-7-deazaguanine + 2 NADPH + 3 H(+). It participates in tRNA modification; tRNA-queuosine biosynthesis. Its function is as follows. Catalyzes the NADPH-dependent reduction of 7-cyano-7-deazaguanine (preQ0) to 7-aminomethyl-7-deazaguanine (preQ1). This is NADPH-dependent 7-cyano-7-deazaguanine reductase from Rhodopseudomonas palustris (strain HaA2).